Here is a 402-residue protein sequence, read N- to C-terminus: Subtilisin-like protease 9 (402 aa).

The signal sequence occupies residues 1–18 (MGFFRILFSLSLCALSLA). Residues 19 to 120 (IPSKLIGLEN…VEVDRVVKLD (102 aa)) constitute a propeptide that is removed on maturation. Residues 36 to 119 (SYIVVMKSAV…YVEVDRVVKL (84 aa)) form the Inhibitor I9 domain. Residues 130 to 402 (SWGLGRISHR…KKLLYNGSGA (273 aa)) enclose the Peptidase S8 domain. Catalysis depends on charge relay system residues aspartate 162 and histidine 193. Asparagine 254 is a glycosylation site (N-linked (GlcNAc...) asparagine). Residue serine 348 is the Charge relay system of the active site. N-linked (GlcNAc...) asparagine glycans are attached at residues asparagine 390 and asparagine 398.

This sequence belongs to the peptidase S8 family.

It localises to the secreted. Its function is as follows. Secreted subtilisin-like serine protease with keratinolytic activity that contributes to pathogenicity. This chain is Subtilisin-like protease 9 (SUB9), found in Arthroderma gypseum (strain ATCC MYA-4604 / CBS 118893) (Microsporum gypseum).